Consider the following 311-residue polypeptide: Delta(1)-pyrroline-2-carboxylate/Delta(1)-piperideine-2-carboxylate reductase (311 aa).

Belongs to the ornithine cyclodeaminase/mu-crystallin family. Homodimer.

It carries out the reaction L-pipecolate + NAD(+) = Delta(1)-piperideine-2-carboxylate + NADH + H(+). It catalyses the reaction L-pipecolate + NADP(+) = Delta(1)-piperideine-2-carboxylate + NADPH + H(+). The catalysed reaction is L-proline + NAD(+) = 1-pyrroline-2-carboxylate + NADH + H(+). The enzyme catalyses L-proline + NADP(+) = 1-pyrroline-2-carboxylate + NADPH + H(+). The protein operates within amino-acid degradation. Functionally, catalyzes the reduction of both Delta(1)-pyrroline-2-carboxylate (Pyr2C) and Delta(1)-piperideine-2-carboxylate (Pip2C) to L-proline and L-pipecolate, respectively, using NADPH or NADH as the electron donor. Can also catalyze the reverse oxidation reactions, albeit at a much lower rate. Together with LhpH, is involved in a trans-3-hydroxy-L-proline (t3LHyp) degradation pathway to L-proline, which allows A.brasilense to grow on t3LHyp as a sole carbon source. Also appears to be involved in D-proline and D-lysine metabolism. Does not show ornithine cyclodeaminase (OCD) activity. This is Delta(1)-pyrroline-2-carboxylate/Delta(1)-piperideine-2-carboxylate reductase from Azospirillum brasilense.